We begin with the raw amino-acid sequence, 275 residues long: NH(3)-dependent NAD(+) synthetase (275 aa).

Residue 46-53 coordinates ATP; it reads GISGGQDS. Mg(2+) is bound at residue Asp-52. Arg-140 is a binding site for deamido-NAD(+). Thr-160 serves as a coordination point for ATP. Residue Glu-165 coordinates Mg(2+). Deamido-NAD(+) is bound by residues Lys-173 and Asp-180. Positions 189 and 211 each coordinate ATP. 260–261 provides a ligand contact to deamido-NAD(+); sequence HK.

The protein belongs to the NAD synthetase family. In terms of assembly, homodimer.

The catalysed reaction is deamido-NAD(+) + NH4(+) + ATP = AMP + diphosphate + NAD(+) + H(+). It participates in cofactor biosynthesis; NAD(+) biosynthesis; NAD(+) from deamido-NAD(+) (ammonia route): step 1/1. In terms of biological role, catalyzes the ATP-dependent amidation of deamido-NAD to form NAD. Uses ammonia as a nitrogen source. The polypeptide is NH(3)-dependent NAD(+) synthetase (Escherichia coli O7:K1 (strain IAI39 / ExPEC)).